The primary structure comprises 492 residues: Cytochrome P450 26A1 (492 aa).

C437 provides a ligand contact to heme.

The protein belongs to the cytochrome P450 family. The cofactor is heme. As to expression, expressed primarily in ovary, brain and eyes.

It localises to the endoplasmic reticulum membrane. The protein localises to the microsome membrane. It catalyses the reaction all-trans-retinoate + reduced [NADPH--hemoprotein reductase] + O2 = all-trans-(4S)-hydroxyretinoate + oxidized [NADPH--hemoprotein reductase] + H2O + H(+). In terms of biological role, a cytochrome P450 monooxygenase involved in the metabolism of all-trans retinoic acid (atRA), a signaling molecule that binds to retinoic acid receptors and regulates gene transcription. May regulate at-RA signaling during hindbrain development. Mechanistically, uses molecular oxygen inserting one oxygen atom into a substrate, and reducing the second into a water molecule, with two electrons provided by NADPH via cytochrome P450 reductase (CPR; NADPH-ferrihemoprotein reductase). Catalyzes the hydroxylation of carbon hydrogen bonds of atRA primarily at C-4. Has no activity toward 9-cis and 13-cis retinoic acid stereoisomers. May play a role in the oxidative metabolism of xenobiotics such as tazarotenic acid. The chain is Cytochrome P450 26A1 (cyp26a1) from Xenopus laevis (African clawed frog).